Reading from the N-terminus, the 139-residue chain is Large ribosomal subunit protein bL17 (139 aa).

The interval 120–139 (EDAKGRDSGPTQDNSEAEAA) is disordered.

Part of the 50S ribosomal subunit. Contacts protein L32. Post-translationally, may be methylated thrice, on undetermined residues.

In Rhodopseudomonas palustris (strain ATCC BAA-98 / CGA009), this protein is Large ribosomal subunit protein bL17.